The following is a 103-amino-acid chain: Integration host factor subunit alpha (103 aa).

The protein belongs to the bacterial histone-like protein family. Heterodimer of an alpha and a beta chain.

This protein is one of the two subunits of integration host factor, a specific DNA-binding protein that functions in genetic recombination as well as in transcriptional and translational control. The protein is Integration host factor subunit alpha of Bartonella bacilliformis (strain ATCC 35685 / KC583 / Herrer 020/F12,63).